A 202-amino-acid chain; its full sequence is Chromophore lyase CpcT/CpeT 2 (202 aa).

This sequence belongs to the CpcT/CpeT biliprotein lyase family.

In terms of biological role, covalently attaches a chromophore to Cys residue(s) of phycobiliproteins. This chain is Chromophore lyase CpcT/CpeT 2, found in Gloeobacter violaceus (strain ATCC 29082 / PCC 7421).